The primary structure comprises 478 residues: 2-succinylbenzoate--CoA ligase (478 aa).

It belongs to the ATP-dependent AMP-binding enzyme family. MenE subfamily.

The catalysed reaction is 2-succinylbenzoate + ATP + CoA = 2-succinylbenzoyl-CoA + AMP + diphosphate. The protein operates within quinol/quinone metabolism; 1,4-dihydroxy-2-naphthoate biosynthesis; 1,4-dihydroxy-2-naphthoate from chorismate: step 5/7. It participates in quinol/quinone metabolism; menaquinone biosynthesis. Functionally, converts 2-succinylbenzoate (OSB) to 2-succinylbenzoyl-CoA (OSB-CoA). The sequence is that of 2-succinylbenzoate--CoA ligase from Bacillus licheniformis (strain ATCC 14580 / DSM 13 / JCM 2505 / CCUG 7422 / NBRC 12200 / NCIMB 9375 / NCTC 10341 / NRRL NRS-1264 / Gibson 46).